A 100-amino-acid polypeptide reads, in one-letter code: Urease subunit gamma (100 aa).

The protein belongs to the urease gamma subunit family. As to quaternary structure, heterotrimer of UreA (gamma), UreB (beta) and UreC (alpha) subunits. Three heterotrimers associate to form the active enzyme.

It localises to the cytoplasm. The catalysed reaction is urea + 2 H2O + H(+) = hydrogencarbonate + 2 NH4(+). Its pathway is nitrogen metabolism; urea degradation; CO(2) and NH(3) from urea (urease route): step 1/1. The polypeptide is Urease subunit gamma (Prochlorococcus marinus (strain NATL2A)).